The sequence spans 152 residues: Superoxide dismutase [Cu-Zn] 1 (152 aa).

Positions 45, 47, and 62 each coordinate Cu cation. Cysteine 56 and cysteine 145 form a disulfide bridge. The Zn(2+) site is built by histidine 62, histidine 70, histidine 79, and aspartate 82. Position 119 (histidine 119) interacts with Cu cation.

Belongs to the Cu-Zn superoxide dismutase family. As to quaternary structure, homodimer. Cu cation serves as cofactor. Zn(2+) is required as a cofactor.

It is found in the cytoplasm. The enzyme catalyses 2 superoxide + 2 H(+) = H2O2 + O2. In terms of biological role, destroys radicals which are normally produced within the cells and which are toxic to biological systems. This is Superoxide dismutase [Cu-Zn] 1 (SODCC.1) from Mesembryanthemum crystallinum (Common ice plant).